The sequence spans 665 residues: SH3 domain-containing kinase-binding protein 1 (665 aa).

2 consecutive SH3 domains span residues 1–58 and 98–157; these read MVEA…EIKK and RRRR…ELSG. 4 positions are modified to phosphoserine: Ser156, Ser159, Ser183, and Ser230. The interval 159-200 is disordered; it reads SDELGISQDEQLSKSSLRETTGSESDGGDSSSTKSEGANGTV. Residues 177 to 195 show a composition bias toward low complexity; that stretch reads ETTGSESDGGDSSSTKSEG. The residue at position 254 (Thr254) is a Phosphothreonine. The 62-residue stretch at 267-328 folds into the SH3 3 domain; the sequence is KSKDYCKVIF…PDNFVKLLPP (62 aa). Disordered regions lie at residues 328–444 and 467–610; these read PDFE…LAGS and DSVV…AAVE. A compositionally biased stretch (basic and acidic residues) spans 355 to 390; that stretch reads TERKHEIKKIPPERPEMLPNRTEEKERPEREPKLDL. A Phosphoserine modification is found at Ser436. The segment covering 469–484 has biased composition (polar residues); it reads VVSSTEKLSHPTTSRP. Over residues 491 to 510 the composition is skewed to low complexity; the sequence is PPSQSLTSSSLSSPDIFDSP. Phosphoserine is present on residues Ser509, Ser511, and Ser521. Basic and acidic residues predominate over residues 517 to 531; the sequence is EEHISLAHRGVDASK. Residues 535–546 are compositionally biased toward polar residues; sequence KTVTISQVSDNK. The segment covering 564 to 582 has biased composition (low complexity); it reads APLSSAAPSPLSSSLGTAG. Position 587 is a phosphoserine (Ser587). Residues 602 to 664 are a coiled coil; that stretch reads AASSQAAVEE…VNDIKKALQS (63 aa).

In terms of assembly, can self-associate and form homotetramers. Interacts with CD2, F-actin capping protein, PIK3R3, GRB2, EGFR, MET, BLNK, MAP3K4, PDCD6IP, SPRY2, ARHGAP17, ARHGAP27, MAGI2, CRK, BCAR1, SOS1, ASAP1, ARAP3, HIP1R, SYNJ2, INPP5D and STAP1. Interacts with E3 ubiquitin-protein ligases CBL and CBLB, but does not interact with CBLC. Two molecules of SH3KBP1 seem to bind through their respective SH3 1 domain to one molecule of CBLB. The interaction with CBL or CBLB and EGFR is increased upon EGF stimulation. The interaction with CBL is attenuated by PDCD6IP. Interacts (via SH3 domains) with ARAP1. The interaction is independent of EGF and does not affect ARAP1 GTPase-activating activity but is involved in regulating ubiquitination and endocytic trafficking of EGFR. ARAP1 competes with CBL for binding to SH3KBP1 and prevents interaction of CBL with SH3KBP1; this is likely to regulate SH3KBP1-mediated internalization of EGFR. Interacts through its proline-rich region with the SH3 domain of endophilins SH3GL1, SH3GL2 and SH3GL3. The SH3KBP1-endophilin complex seems to associate with a complex containing the phosphorylated receptor (EGFR or MET) and phosphorylated CBL. Probably associates with ASAP1 and phosphorylated EGFR. Probably part of a complex consisting of at least SH3KBP1, ASAP1 and ARAP3. Interacts with focal adhesion kinases PTK2/FAK1 and PTK2B/PYK2, probably as a dimer. Interacts with DAB2 and probably associates with chathrin through its interaction with DAB2. Part of a complex consisting of SH3KBP1, DAB2, and clathrin heavy chain. DAB2 and clathrin dissociate from SH3KBP1 following growth factor treatment, enabling interaction with CBL. Interacts with DDN and probably associates with MAGI2 through its interaction with DDN. Interacts with the SH3 domains of SRC tyrosine-protein kinases SRC, LCK, LYN, FGR, FYN and HCK. Interacts with TRADD, BIRC2, TRAF1, TRAF2 and TNFR1, and the association with a TNFR1-associated complex upon stimulation with TNF-alpha seems to be mediated by SRC. Interacts (via SH3 domains) with SHKBP1 (via PXXXPR motifs). Interaction with CBL is abolished in the presence of SHKBP1. Interacts (via SH3 domains) with ZFP36 (via extreme C-terminal region). Interacts with MAP3K4; this interaction enhances the association with ZFP36. (Microbial infection) Interacts (via SH3 domains) with Chikungunya virus non-structural protein 3 (via C-terminus); this interaction plays a role in initiation of viral replication. In terms of processing, monoubiquitinated by CBL and CBLB after EGF stimulation; probably on its C-terminus. Ubiquitously expressed. Also expressed in some cancer cell lines.

It is found in the cytoplasm. The protein localises to the cytoskeleton. Its subcellular location is the cytoplasmic vesicle membrane. It localises to the synapse. The protein resides in the synaptosome. It is found in the cell junction. The protein localises to the focal adhesion. In terms of biological role, adapter protein involved in regulating diverse signal transduction pathways. Involved in the regulation of endocytosis and lysosomal degradation of ligand-induced receptor tyrosine kinases, including EGFR and MET/hepatocyte growth factor receptor, through an association with CBL and endophilins. The association with CBL, and thus the receptor internalization, may be inhibited by an interaction with PDCD6IP and/or SPRY2. Involved in regulation of ligand-dependent endocytosis of the IgE receptor. Attenuates phosphatidylinositol 3-kinase activity by interaction with its regulatory subunit. May be involved in regulation of cell adhesion; promotes the interaction between TTK2B and PDCD6IP. May be involved in the regulation of cellular stress response via the MAPK pathways through its interaction with MAP3K4. Is involved in modulation of tumor necrosis factor mediated apoptosis. Plays a role in the regulation of cell morphology and cytoskeletal organization. Required in the control of cell shape and migration. Has an essential role in the stimulation of B cell activation. The protein is SH3 domain-containing kinase-binding protein 1 (SH3KBP1) of Homo sapiens (Human).